The sequence spans 1828 residues: AT-rich interactive domain-containing protein 2 (1828 aa).

A2 is modified (N-acetylalanine). S4 carries the phosphoserine modification. Residues K7, K15, and K119 each participate in a glycyl lysine isopeptide (Lys-Gly) (interchain with G-Cter in SUMO2) cross-link. Residues 13–105 form the ARID domain; sequence RRKGLAFLDE…YLEKYEKVHH (93 aa). Residues 313-317 carry the LXXLL motif; sequence LRFLL. The RFX-type winged-helix DNA-binding region spans 524–603; sequence ACQWLNAHFE…IHVIGVKRRA (80 aa). Residue K555 forms a Glycyl lysine isopeptide (Lys-Gly) (interchain with G-Cter in SUMO2) linkage. A phosphoserine mark is found at S631 and S635. The residue at position 653 (T653) is a Phosphothreonine. S689 carries the phosphoserine modification. T692 carries the phosphothreonine modification. Disordered stretches follow at residues 824–843, 962–1028, 1245–1339, 1360–1462, 1483–1503, and 1566–1618; these read TSPQ…SQPQ, LTGQ…QVQV, KEAT…EPVD, KGDG…RPSV, HSGP…TNGT, and SAAQ…HADP. Residues 987-1011 are compositionally biased toward polar residues; sequence AMSSSSTLQSQGPPPTVSQMLSVKR. The segment covering 1012 to 1028 has biased composition (low complexity); the sequence is QQQQQHSPAAPAQQVQV. Positions 1245–1259 are enriched in basic and acidic residues; sequence KEATGLHVHERKIEV. Over residues 1267–1283 the composition is skewed to polar residues; it reads RGTTNTSNGDTSESELQ. A Phosphoserine modification is found at S1294. 2 stretches are compositionally biased toward polar residues: residues 1295 to 1320 and 1366 to 1379; these read DSSL…SNGP and LSKN…SNHV. S1385 bears the Phosphoserine mark. 2 stretches are compositionally biased toward polar residues: residues 1390–1400 and 1419–1428; these read QGTSGATQQDT and GSPSTSSMQE. Residues 1453–1462 show a composition bias toward low complexity; that stretch reads SDVPQQRPSV. S1491 is subject to Phosphoserine. Composition is skewed to polar residues over residues 1491–1503 and 1567–1586; these read SALS…TNGT and AAQQ…APQN. Low complexity predominate over residues 1594–1614; that stretch reads AVQVQGQPSSSQPSPVSASSQ. Residues 1626-1651 form a C2H2-type zinc finger; the sequence is FMCLWQSCKKWFQTPSQVFYHAATEH. Residues K1695, K1710, and K1725 each participate in a glycyl lysine isopeptide (Lys-Gly) (interchain with G-Cter in SUMO2) cross-link. The tract at residues 1697-1726 is disordered; it reads DEPGQVANQKSSTKQPTVGGTGSAPRAQKA. A compositionally biased stretch (polar residues) spans 1702–1714; sequence VANQKSSTKQPTV.

It belongs to the RFX family. As to quaternary structure, component of the SWI/SNF-B (PBAF) chromatin remodeling complex, at least composed of SMARCA4/BRG1, SMARCB1/BAF47/SNF5, ACTL6A/BAF53A or ACTL6B/BAF53B, SMARCE1/BAF57, SMARCD1/BAF60A, SMARCD2/BAF60B, perhaps SMARCD3/BAF60C, SMARCC1/BAF155, SMARCC2/BAF170, PBRM1/BAF180, ARID2/BAF200 and actin. Interacts with SRF. Forms complexes with SRF and SRF cofactors MYOCD, NKX2-5 and SRFBP1. Highly expressed in testis, expressed in heart, liver and kidney.

It localises to the nucleus. Its function is as follows. Involved in transcriptional activation and repression of select genes by chromatin remodeling (alteration of DNA-nucleosome topology). Required for the stability of the SWI/SNF chromatin remodeling complex SWI/SNF-B (PBAF). May be involved in targeting the complex to different genes. May be involved in regulating transcriptional activation of cardiac genes. The chain is AT-rich interactive domain-containing protein 2 from Mus musculus (Mouse).